The chain runs to 350 residues: tRNA-splicing endonuclease (350 aa).

Residues Tyr286, His297, and Lys328 contribute to the active site.

It belongs to the tRNA-intron endonuclease family. Archaeal long subfamily. As to quaternary structure, homodimer.

The catalysed reaction is pretRNA = a 3'-half-tRNA molecule with a 5'-OH end + a 5'-half-tRNA molecule with a 2',3'-cyclic phosphate end + an intron with a 2',3'-cyclic phosphate and a 5'-hydroxyl terminus.. Endonuclease that removes tRNA introns. Cleaves pre-tRNA at the 5'- and 3'-splice sites to release the intron. The products are an intron and two tRNA half-molecules bearing 2',3' cyclic phosphate and 5'-OH termini. Recognizes a pseudosymmetric substrate in which 2 bulged loops of 3 bases are separated by a stem of 4 bp. This is tRNA-splicing endonuclease from Methanosarcina barkeri (strain Fusaro / DSM 804).